Here is a 360-residue protein sequence, read N- to C-terminus: Isocitrate dehydrogenase [NAD] regulatory subunit B, mitochondrial (360 aa).

A mitochondrion-targeting transit peptide spans 1-113 (MLGRLRTVVK…MELRKALDLY (113 aa)). The substrate site is built by Ser-101, Asn-103, Arg-107, and Arg-140. Residue Asp-227 participates in Mg(2+) binding. Residues 284–290 (HHVAADI) and Asn-297 each bind NADP(+).

This sequence belongs to the isocitrate and isopropylmalate dehydrogenases family. In terms of assembly, heterooligomer of catalytic and regulatory subunits. It depends on Mg(2+) as a cofactor. Requires Mn(2+) as cofactor.

It is found in the mitochondrion. The catalysed reaction is D-threo-isocitrate + NAD(+) = 2-oxoglutarate + CO2 + NADH. In terms of biological role, performs an essential role in the oxidative function of the citric acid cycle. The protein is Isocitrate dehydrogenase [NAD] regulatory subunit B, mitochondrial (idhB) of Dictyostelium discoideum (Social amoeba).